The sequence spans 728 residues: Phosphoribosylformylglycinamidine synthase subunit PurL (728 aa).

Histidine 42 is an active-site residue. ATP-binding residues include tyrosine 45 and lysine 84. Glutamate 86 provides a ligand contact to Mg(2+). Substrate contacts are provided by residues 87-90 (SHNH) and arginine 109. Histidine 88 serves as the catalytic Proton acceptor. Aspartate 110 is a Mg(2+) binding site. Glutamine 237 lines the substrate pocket. Position 265 (aspartate 265) interacts with Mg(2+). 309-311 (ESQ) contributes to the substrate binding site. Residues aspartate 491 and glycine 528 each coordinate ATP. Position 529 (asparagine 529) interacts with Mg(2+). Serine 531 serves as a coordination point for substrate.

It belongs to the FGAMS family. In terms of assembly, monomer. Part of the FGAM synthase complex composed of 1 PurL, 1 PurQ and 2 PurS subunits.

The protein resides in the cytoplasm. It catalyses the reaction N(2)-formyl-N(1)-(5-phospho-beta-D-ribosyl)glycinamide + L-glutamine + ATP + H2O = 2-formamido-N(1)-(5-O-phospho-beta-D-ribosyl)acetamidine + L-glutamate + ADP + phosphate + H(+). It participates in purine metabolism; IMP biosynthesis via de novo pathway; 5-amino-1-(5-phospho-D-ribosyl)imidazole from N(2)-formyl-N(1)-(5-phospho-D-ribosyl)glycinamide: step 1/2. Part of the phosphoribosylformylglycinamidine synthase complex involved in the purines biosynthetic pathway. Catalyzes the ATP-dependent conversion of formylglycinamide ribonucleotide (FGAR) and glutamine to yield formylglycinamidine ribonucleotide (FGAM) and glutamate. The FGAM synthase complex is composed of three subunits. PurQ produces an ammonia molecule by converting glutamine to glutamate. PurL transfers the ammonia molecule to FGAR to form FGAM in an ATP-dependent manner. PurS interacts with PurQ and PurL and is thought to assist in the transfer of the ammonia molecule from PurQ to PurL. This Campylobacter jejuni subsp. jejuni serotype O:2 (strain ATCC 700819 / NCTC 11168) protein is Phosphoribosylformylglycinamidine synthase subunit PurL.